Here is a 217-residue protein sequence, read N- to C-terminus: Adenylate kinase (217 aa).

Gly10–Thr15 provides a ligand contact to ATP. The segment at Ser30–Val59 is NMP. AMP is bound by residues Thr31, Arg36, Glu57 to Val59, Gly85 to Arg88, and Gln92. Positions Gly126 to Asp163 are LID. ATP contacts are provided by residues Arg127 and Thr136–Tyr137. Residues Arg160 and Arg171 each coordinate AMP. Residue Gln199 coordinates ATP.

It belongs to the adenylate kinase family. In terms of assembly, monomer.

The protein resides in the cytoplasm. The catalysed reaction is AMP + ATP = 2 ADP. The protein operates within purine metabolism; AMP biosynthesis via salvage pathway; AMP from ADP: step 1/1. Functionally, catalyzes the reversible transfer of the terminal phosphate group between ATP and AMP. Plays an important role in cellular energy homeostasis and in adenine nucleotide metabolism. This Halalkalibacterium halodurans (strain ATCC BAA-125 / DSM 18197 / FERM 7344 / JCM 9153 / C-125) (Bacillus halodurans) protein is Adenylate kinase.